A 447-amino-acid polypeptide reads, in one-letter code: MREILHIQGGQCGNQIGAKFWEVICDEHGIDHTGKYSGDSDLQLERINVYYNEASGGRFVPRAVLMDLEPGTMDSVRSGPFGQIFRPDNFVFGQSGAGNNWAKGHYTEGAELIDSVLDVVRKEAENCDCLQGFQVCHSLGGGTGSGMGTLLISKIREEYPDRMMLTFSVFPSPKVSDTVVEPYNATLSVHQLVENADECMVLDNEALYDICFRTLKLATPTFGDLNHLISATMSGVTCCLRFPGQLNSDLRKLAVNLIPFPRLHFFMVGFAPLTSRGSQQYRALTVPELTQQMWDAKNMMCAADPRHGRYLTASAMFRGKMSTKEVDEQMLNVQNKNSSYFVEWIPNNVKSSVCDIPPNGLKMASTFIGNSTSIQEMFRRVSEQFTAMFRRKAFLHWYTGEGMDEMEFTEAESNMNDLVAEYQQYQDATADDEEEDYGDEEEDEVAA.

GTP-binding residues include Gln-11, Glu-69, Ser-138, Gly-142, Thr-143, Gly-144, Asn-204, and Asn-226. Position 69 (Glu-69) interacts with Mg(2+). The segment at 421-447 (EYQQYQDATADDEEEDYGDEEEDEVAA) is disordered. Residues 429–447 (TADDEEEDYGDEEEDEVAA) are compositionally biased toward acidic residues.

Belongs to the tubulin family. In terms of assembly, dimer of alpha and beta chains. A typical microtubule is a hollow water-filled tube with an outer diameter of 25 nm and an inner diameter of 15 nM. Alpha-beta heterodimers associate head-to-tail to form protofilaments running lengthwise along the microtubule wall with the beta-tubulin subunit facing the microtubule plus end conferring a structural polarity. Microtubules usually have 13 protofilaments but different protofilament numbers can be found in some organisms and specialized cells. The cofactor is Mg(2+). Expressed in roots, leaf sheaths, and suspension cultured cells.

It localises to the cytoplasm. The protein localises to the cytoskeleton. Its function is as follows. Tubulin is the major constituent of microtubules, a cylinder consisting of laterally associated linear protofilaments composed of alpha- and beta-tubulin heterodimers. Microtubules grow by the addition of GTP-tubulin dimers to the microtubule end, where a stabilizing cap forms. Below the cap, tubulin dimers are in GDP-bound state, owing to GTPase activity of alpha-tubulin. In Oryza sativa subsp. japonica (Rice), this protein is Tubulin beta-5 chain (TUBB5).